The chain runs to 676 residues: Mediator of RNA polymerase II transcription subunit 17 (676 aa).

Disordered stretches follow at residues 27–68 (IGSK…QFSN) and 117–176 (IEND…TQDT). Residues 29-40 (SKSTSPHSNSTS) are compositionally biased toward low complexity. Basic and acidic residues-rich tracts occupy residues 47-56 (HNTENEEVDN) and 120-134 (DNGK…KAED). Acidic residues predominate over residues 135–145 (GIDTMDIDQND). The segment covering 146 to 160 (NSEANTNDIGYNEWS) has biased composition (polar residues).

It belongs to the Mediator complex subunit 17 family. In terms of assembly, component of the Mediator complex.

The protein localises to the nucleus. In terms of biological role, component of the Mediator complex, a coactivator involved in the regulated transcription of nearly all RNA polymerase II-dependent genes. Mediator functions as a bridge to convey information from gene-specific regulatory proteins to the basal RNA polymerase II transcription machinery. Mediator is recruited to promoters by direct interactions with regulatory proteins and serves as a scaffold for the assembly of a functional preinitiation complex with RNA polymerase II and the general transcription factors. This chain is Mediator of RNA polymerase II transcription subunit 17 (SRB4), found in Candida glabrata (strain ATCC 2001 / BCRC 20586 / JCM 3761 / NBRC 0622 / NRRL Y-65 / CBS 138) (Yeast).